Reading from the N-terminus, the 525-residue chain is Glucans biosynthesis protein G (525 aa).

The first 35 residues, 1-35, serve as a signal peptide directing secretion; sequence MIFRSVSNTDFRARVRTLLLAGSTALAFVAAPVWA.

This sequence belongs to the OpgD/OpgG family.

It is found in the periplasm. It functions in the pathway glycan metabolism; osmoregulated periplasmic glucan (OPG) biosynthesis. Its function is as follows. Involved in the biosynthesis of osmoregulated periplasmic glucans (OPGs). This Pseudomonas paraeruginosa (strain DSM 24068 / PA7) (Pseudomonas aeruginosa (strain PA7)) protein is Glucans biosynthesis protein G.